A 264-amino-acid polypeptide reads, in one-letter code: Thymidylate synthase (264 aa).

DUMP-binding positions include R21 and 126 to 127 (RR). C146 serves as the catalytic Nucleophile. Residues 166–169 (RSAD), N177, and 207–209 (HLY) each bind dUMP. D169 is a binding site for (6R)-5,10-methylene-5,6,7,8-tetrahydrofolate. A (6R)-5,10-methylene-5,6,7,8-tetrahydrofolate-binding site is contributed by A263.

It belongs to the thymidylate synthase family. Bacterial-type ThyA subfamily. As to quaternary structure, homodimer.

The protein localises to the cytoplasm. The enzyme catalyses dUMP + (6R)-5,10-methylene-5,6,7,8-tetrahydrofolate = 7,8-dihydrofolate + dTMP. It participates in pyrimidine metabolism; dTTP biosynthesis. Catalyzes the reductive methylation of 2'-deoxyuridine-5'-monophosphate (dUMP) to 2'-deoxythymidine-5'-monophosphate (dTMP) while utilizing 5,10-methylenetetrahydrofolate (mTHF) as the methyl donor and reductant in the reaction, yielding dihydrofolate (DHF) as a by-product. This enzymatic reaction provides an intracellular de novo source of dTMP, an essential precursor for DNA biosynthesis. The sequence is that of Thymidylate synthase from Rhodopseudomonas palustris (strain HaA2).